A 66-amino-acid chain; its full sequence is Cold shock-like protein CspLA (66 aa).

The region spanning 4-63 is the CSD domain; sequence GTVKWFNAEKGFGFIERENGDDVFVHFSAIQGDGFKSLDEGQAVTFDVEEGQRGPQAANV.

As to quaternary structure, homodimer.

It is found in the cytoplasm. The chain is Cold shock-like protein CspLA (cspLA) from Listeria innocua serovar 6a (strain ATCC BAA-680 / CLIP 11262).